We begin with the raw amino-acid sequence, 511 residues long: Fusicocca-1,10(14)-diene-8beta,16-diol C-9 hydroxylase (511 aa).

Residues 7-29 (TVAALAAVFVAGTLLSRLASWIR) form a helical membrane-spanning segment. Residues Asn64, Asn163, and Asn343 are each glycosylated (N-linked (GlcNAc...) asparagine). Cys450 is a binding site for heme.

Belongs to the cytochrome P450 family. It depends on heme as a cofactor.

It is found in the membrane. It participates in mycotoxin biosynthesis. In terms of biological role, cytochrome P450 monooxygenase; part of the 2 gene clusters that mediate the biosynthesis of fusicoccins, diterpene glucosides that display phytohormone-like activity and function as potent activators of plasma membrane H(+)-ATPases in plants by modifying 14-3-3 proteins and cause the plant disease constriction canker. The first step in the pathway is performed by the fusicoccadiene synthase PaFS that possesses both prenyl transferase and terpene cyclase activity, converting isopentenyl diphosphate and dimethylallyl diphosphate into geranylgeranyl diphosphate (GGDP) and successively converting GGDP into fusicocca-2,10(14)-diene, a precursor for fusicoccin H. The second step is the oxidation at the C-8 position by the cytochrome P450 monooxygenase PaP450-2 to yield fusicocca-2,10(14)-diene-8-beta-ol. The cytochrome P450 monooxygenase PaP450-1 then catalyzes the hydroxylation at the C-16 position to produce fusicocca-2,10(14)-diene-8-beta,16-diol. The dioxygenase fc-dox then catalyzes the 16-oxydation of fusicocca-2,10(14)-diene-8-beta,16-diol to yield an aldehyde (8-beta-hydroxyfusicocca-1,10(14)-dien-16-al). The short-chain dehydrogenase/reductase fc-sdr catalyzes the reduction of the aldehyde to yield fusicocca-1,10(14)-diene-8-beta,16-diol. The next step is the hydroxylation at C-9 performed by the cytochrome P450 monooxygenase PaP450-3 that leads to fusicoccin H aglycon which is glycosylated to fusicoccin H by the O-glycosyltransferase PaGT. Hydroxylation at C-12 by the cytochrome P450 monooxygenase PaP450-4 leads then to the production of fusicoccin Q and is followed by methylation by the O-methyltransferase PaMT to yield fusicoccin P. Fusicoccin P is further converted to fusicoccin J via prenylation by the O-glucose prenyltransferase PaPT. Cytochrome P450 monooxygenase PaP450-5 then performs hydroxylation at C-19 to yield dideacetyl-fusicoccin A which is acetylated to 3'-O-deacetyl-fusicoccin A by the O-acetyltransferase PaAT-2. Finally, a another acetylation by the O-acetyltransferase PaAT-1 yields fusicoccin A. In Phomopsis amygdali (Fusicoccum amygdali), this protein is Fusicocca-1,10(14)-diene-8beta,16-diol C-9 hydroxylase.